A 239-amino-acid chain; its full sequence is DUP240 protein DFP3 (239 aa).

Residues 1-54 (MQPHLDNNSNNDDVKLDTLGEQNVLSSAENITLPEDTFKSYMTYLLYEMAHYKP) are Cytoplasmic-facing. Residues 55–75 (MIFSFLALSVSILIVVIFHNV) traverse the membrane as a helical segment. Topologically, residues 76–79 (KACD) are extracellular. The helical transmembrane segment at 80–104 (VVFGFSIFVTSILFLSTLIPFNVYI) threads the bilayer. Residues 105-239 (SDEGFRIKLL…RKQYPDADIP (135 aa)) are Cytoplasmic-facing.

Belongs to the DUP/COS family. Interacts according to large scale protein interaction studies with MEC3 and ULP1.

It is found in the membrane. The chain is DUP240 protein DFP3 from Saccharomyces cerevisiae (strain ATCC 204508 / S288c) (Baker's yeast).